An 80-amino-acid chain; its full sequence is Large ribosomal subunit protein eL38 (80 aa).

It belongs to the eukaryotic ribosomal protein eL38 family. Component of the large ribosomal subunit (LSU). Mature N.crassa ribosomes consist of a small (40S) and a large (60S) subunit. The 40S small subunit contains 1 molecule of ribosomal RNA (18S rRNA) and at least 32 different proteins. The large 60S subunit contains 3 rRNA molecules (26S, 5.8S and 5S rRNA) and at least 42 different proteins.

Its subcellular location is the cytoplasm. Component of the ribosome, a large ribonucleoprotein complex responsible for the synthesis of proteins in the cell. The small ribosomal subunit (SSU) binds messenger RNAs (mRNAs) and translates the encoded message by selecting cognate aminoacyl-transfer RNA (tRNA) molecules. The large subunit (LSU) contains the ribosomal catalytic site termed the peptidyl transferase center (PTC), which catalyzes the formation of peptide bonds, thereby polymerizing the amino acids delivered by tRNAs into a polypeptide chain. The nascent polypeptides leave the ribosome through a tunnel in the LSU and interact with protein factors that function in enzymatic processing, targeting, and the membrane insertion of nascent chains at the exit of the ribosomal tunnel. This chain is Large ribosomal subunit protein eL38 (rpl-38), found in Neurospora crassa (strain ATCC 24698 / 74-OR23-1A / CBS 708.71 / DSM 1257 / FGSC 987).